The chain runs to 419 residues: UDP-N-acetylglucosamine 1-carboxyvinyltransferase (419 aa).

22-23 serves as a coordination point for phosphoenolpyruvate; that stretch reads KN. R93 serves as a coordination point for UDP-N-acetyl-alpha-D-glucosamine. C117 serves as the catalytic Proton donor. C117 is subject to 2-(S-cysteinyl)pyruvic acid O-phosphothioketal. D307 and I329 together coordinate UDP-N-acetyl-alpha-D-glucosamine.

Belongs to the EPSP synthase family. MurA subfamily.

The protein localises to the cytoplasm. It carries out the reaction phosphoenolpyruvate + UDP-N-acetyl-alpha-D-glucosamine = UDP-N-acetyl-3-O-(1-carboxyvinyl)-alpha-D-glucosamine + phosphate. The protein operates within cell wall biogenesis; peptidoglycan biosynthesis. In terms of biological role, cell wall formation. Adds enolpyruvyl to UDP-N-acetylglucosamine. This Shewanella sp. (strain MR-7) protein is UDP-N-acetylglucosamine 1-carboxyvinyltransferase.